The primary structure comprises 332 residues: Glycerol-3-phosphate dehydrogenase [NAD(P)+] (332 aa).

The NADPH site is built by S11, W12, R32, R33, and K106. Sn-glycerol 3-phosphate contacts are provided by K106 and G136. A140 lines the NADPH pocket. Positions 191, 244, 254, 255, and 256 each coordinate sn-glycerol 3-phosphate. K191 acts as the Proton acceptor in catalysis. Position 255 (R255) interacts with NADPH. NADPH-binding residues include V280 and E282.

This sequence belongs to the NAD-dependent glycerol-3-phosphate dehydrogenase family.

The protein localises to the cytoplasm. The catalysed reaction is sn-glycerol 3-phosphate + NAD(+) = dihydroxyacetone phosphate + NADH + H(+). It carries out the reaction sn-glycerol 3-phosphate + NADP(+) = dihydroxyacetone phosphate + NADPH + H(+). Its pathway is membrane lipid metabolism; glycerophospholipid metabolism. Functionally, catalyzes the reduction of the glycolytic intermediate dihydroxyacetone phosphate (DHAP) to sn-glycerol 3-phosphate (G3P), the key precursor for phospholipid synthesis. The protein is Glycerol-3-phosphate dehydrogenase [NAD(P)+] of Corynebacterium jeikeium (strain K411).